The primary structure comprises 508 residues: Lysine--tRNA ligase (508 aa).

The Mg(2+) site is built by E418 and E425.

It belongs to the class-II aminoacyl-tRNA synthetase family. In terms of assembly, homodimer. Requires Mg(2+) as cofactor.

Its subcellular location is the cytoplasm. The enzyme catalyses tRNA(Lys) + L-lysine + ATP = L-lysyl-tRNA(Lys) + AMP + diphosphate. In Burkholderia thailandensis (strain ATCC 700388 / DSM 13276 / CCUG 48851 / CIP 106301 / E264), this protein is Lysine--tRNA ligase.